Reading from the N-terminus, the 462-residue chain is ATP synthase subunit beta (462 aa).

Residue 152–159 (GGAGVGKT) coordinates ATP.

The protein belongs to the ATPase alpha/beta chains family. In terms of assembly, F-type ATPases have 2 components, CF(1) - the catalytic core - and CF(0) - the membrane proton channel. CF(1) has five subunits: alpha(3), beta(3), gamma(1), delta(1), epsilon(1). CF(0) has three main subunits: a(1), b(2) and c(9-12). The alpha and beta chains form an alternating ring which encloses part of the gamma chain. CF(1) is attached to CF(0) by a central stalk formed by the gamma and epsilon chains, while a peripheral stalk is formed by the delta and b chains.

The protein resides in the cell inner membrane. The enzyme catalyses ATP + H2O + 4 H(+)(in) = ADP + phosphate + 5 H(+)(out). Functionally, produces ATP from ADP in the presence of a proton gradient across the membrane. The catalytic sites are hosted primarily by the beta subunits. The sequence is that of ATP synthase subunit beta from Blochmanniella pennsylvanica (strain BPEN).